Reading from the N-terminus, the 404-residue chain is Pectate lyase E (404 aa).

The signal sequence occupies residues 1–41 (MNNSRMSSVSTQKTTGRSALGTKSALAAIIATTMMVSVASA). Residues Asp-182 and Asp-225 each contribute to the Ca(2+) site. Arg-278 is a catalytic residue.

This sequence belongs to the polysaccharide lyase 1 family. PLBC subfamily. Ca(2+) serves as cofactor.

Its subcellular location is the secreted. It catalyses the reaction Eliminative cleavage of (1-&gt;4)-alpha-D-galacturonan to give oligosaccharides with 4-deoxy-alpha-D-galact-4-enuronosyl groups at their non-reducing ends.. It functions in the pathway glycan metabolism; pectin degradation; 2-dehydro-3-deoxy-D-gluconate from pectin: step 2/5. Involved in maceration and soft-rotting of plant tissue. Pectate lyases have been implicated as pathogenicity factors which induce maceration or rotting of plant tissue. PelE is sufficient to induce these effects under laboratory conditions. The chain is Pectate lyase E (pelE) from Dickeya dadantii (strain 3937) (Erwinia chrysanthemi (strain 3937)).